The sequence spans 225 residues: Small ribosomal subunit protein uS3 (225 aa).

Positions 16 to 85 (VYEYLVKETE…TPQIEVKDVK (70 aa)) constitute a KH type-2 domain. Positions 200 to 225 (GENVGTESETDKADEQGREAANTEES) are disordered. Positions 208 to 217 (ETDKADEQGR) are enriched in basic and acidic residues.

Belongs to the universal ribosomal protein uS3 family. As to quaternary structure, part of the 30S ribosomal subunit.

Functionally, binds the lower part of the 30S subunit head. This is Small ribosomal subunit protein uS3 from Thermoplasma volcanium (strain ATCC 51530 / DSM 4299 / JCM 9571 / NBRC 15438 / GSS1).